The chain runs to 175 residues: Cytochrome c homolog (175 aa).

At Met-1–Lys-8 the chain is on the cytoplasmic side. Residues Ile-9–Ile-29 traverse the membrane as a helical; Signal-anchor segment. Over Leu-30–Lys-175 the chain is Periplasmic. Residues Cys-84, Cys-87, His-88, and Met-150 each contribute to the heme c site.

Belongs to the cytochrome c family. Post-translationally, binds 1 heme c group covalently per subunit.

Its subcellular location is the cell membrane. Functionally, may be involved in electron transfer from bc1 complex to aa3. This Rickettsia conorii (strain ATCC VR-613 / Malish 7) protein is Cytochrome c homolog (cycM).